A 546-amino-acid chain; its full sequence is Glucose-6-phosphate isomerase (546 aa).

The active-site Proton donor is Glu-352. Active-site residues include His-383 and Lys-511.

The protein belongs to the GPI family.

Its subcellular location is the cytoplasm. It catalyses the reaction alpha-D-glucose 6-phosphate = beta-D-fructose 6-phosphate. It participates in carbohydrate biosynthesis; gluconeogenesis. It functions in the pathway carbohydrate degradation; glycolysis; D-glyceraldehyde 3-phosphate and glycerone phosphate from D-glucose: step 2/4. Its function is as follows. Catalyzes the reversible isomerization of glucose-6-phosphate to fructose-6-phosphate. The polypeptide is Glucose-6-phosphate isomerase (Paramagnetospirillum magneticum (strain ATCC 700264 / AMB-1) (Magnetospirillum magneticum)).